The following is a 352-amino-acid chain: Cyclin-dependent kinase 7 (352 aa).

The Protein kinase domain occupies 18–301 (YEKLDFLGEG…ASQALRKRYF (284 aa)). ATP contacts are provided by residues 24–32 (LGEGQFATV) and Lys-47. The active-site Proton acceptor is the Asp-143. Ser-170 bears the Phosphoserine; by CDK1 and CDK2 mark. The residue at position 176 (Thr-176) is a Phosphothreonine; by CDK2.

It belongs to the protein kinase superfamily. CMGC Ser/Thr protein kinase family. CDC2/CDKX subfamily. As to quaternary structure, probably associates with cyclin-H (ccnh) and mat1 to form a multimeric active enzyme. Post-translationally, phosphorylation of Ser-170 during mitosis inactivates the enzyme. Phosphorylation of Thr-176 is required for activity. Phosphorylated at Ser-170 and Thr-176 by CDK2.

It is found in the nucleus. It catalyses the reaction L-seryl-[protein] + ATP = O-phospho-L-seryl-[protein] + ADP + H(+). The catalysed reaction is L-threonyl-[protein] + ATP = O-phospho-L-threonyl-[protein] + ADP + H(+). The enzyme catalyses [DNA-directed RNA polymerase] + ATP = phospho-[DNA-directed RNA polymerase] + ADP + H(+). With respect to regulation, phosphorylation at Thr-176 is required for enzymatic activity. Functionally, serine/threonine kinase involved in cell cycle control and in RNA polymerase II-mediated RNA transcription. Cyclin-dependent kinases (CDKs) are activated by the binding to a cyclin and mediate the progression through the cell cycle. Each different complex controls a specific transition between 2 subsequent phases in the cell cycle. Required for both activation and complex formation of cdk1/cyclin-B during G2-M transition, and for activation of cdk2/cyclins during G1-S transition (but not complex formation). cdk7 is the catalytic subunit of the CDK-activating kinase (CAK) complex. CAK activates the cyclin-associated kinases cdk1, cdk2, cdk4 and cdk6 by threonine phosphorylation, thus regulating cell cycle progression. Initiates transcription by RNA polymerase II by mediating phosphorylation of polr2a at 'Ser-5' of the repetitive C-terminal domain (CTD) when polr2a is in complex with DNA, promoting dissociation from DNA and initiation. CAK complexed to the core-TFIIH basal transcription factor activates RNA polymerase II by serine phosphorylation of the CTD of polr2a, allowing its escape from the promoter and elongation of the transcripts. In Xenopus laevis (African clawed frog), this protein is Cyclin-dependent kinase 7 (cdk7).